Here is a 310-residue protein sequence, read N- to C-terminus: Apolipoprotein E (310 aa).

The signal sequence occupies residues 1–18 (MKALWAVLLATLLTGCLS). 8 repeat units span residues 72–93 (VLME…EQLG), 94–115 (PVAE…ARLG), 116–137 (ADME…TMLG), 138–159 (QSTE…KRLM), 160–181 (RDAE…EGAE), 182–203 (RGVS…QRTA), 204–225 (NLGA…DRLR), and 226–247 (GRLE…EHME). The interval 72–247 (VLMEDTMTEV…RLEEMREHME (176 aa)) is 8 X 22 AA approximate tandem repeats. Met135 is modified (methionine sulfoxide). Positions 150–160 (HLRKMRKRLMR) are LDL and other lipoprotein receptors binding. The tract at residues 150-160 (HLRKMRKRLMR) is LDL receptor binding. 154–157 (MRKR) is a heparin binding site. The segment at 202–282 (TANLGAGVAQ…GWFEPLVEDM (81 aa)) is lipid-binding and lipoprotein association. 221 to 228 (GDRLRGRL) is a heparin binding site. Residues 258 to 310 (QQIRLQAEIFQARLKGWFEPLVEDMQRQLANLVEKIQASTNSVLSTSVPQENQ) are homooligomerization. Positions 270–282 (RLKGWFEPLVEDM) are specificity for association with VLDL.

The protein belongs to the apolipoprotein A1/A4/E family. Homotetramer. May interact with ABCA1; functionally associated with ABCA1 in the biogenesis of HDLs. May interact with APP/A4 amyloid-beta peptide; the interaction is extremely stable in vitro but its physiological significance is unclear. May interact with MAPT. May interact with MAP2. In the cerebrospinal fluid, interacts with secreted SORL1. Interacts with PMEL; this allows the loading of PMEL luminal fragment on ILVs to induce fibril nucleation. In terms of processing, APOE exists as multiple glycosylated and sialylated glycoforms within cells and in plasma. The extent of glycosylation and sialylation are tissue and context specific. Post-translationally, glycated in plasma VLDL. Phosphorylated by FAM20C in the extracellular medium.

The protein resides in the secreted. It is found in the extracellular space. Its subcellular location is the extracellular matrix. The protein localises to the extracellular vesicle. It localises to the endosome. The protein resides in the multivesicular body. Its function is as follows. APOE is an apolipoprotein, a protein associating with lipid particles, that mainly functions in lipoprotein-mediated lipid transport between organs via the plasma and interstitial fluids. APOE is a core component of plasma lipoproteins and is involved in their production, conversion and clearance. Apolipoproteins are amphipathic molecules that interact both with lipids of the lipoprotein particle core and the aqueous environment of the plasma. As such, APOE associates with chylomicrons, chylomicron remnants, very low density lipoproteins (VLDL) and intermediate density lipoproteins (IDL) but shows a preferential binding to high-density lipoproteins (HDL). It also binds a wide range of cellular receptors including the LDL receptor/LDLR, the LDL receptor-related proteins LRP1, LRP2 and LRP8 and the very low-density lipoprotein receptor/VLDLR that mediate the cellular uptake of the APOE-containing lipoprotein particles. Finally, APOE also has a heparin-binding activity and binds heparan-sulfate proteoglycans on the surface of cells, a property that supports the capture and the receptor-mediated uptake of APOE-containing lipoproteins by cells. A main function of APOE is to mediate lipoprotein clearance through the uptake of chylomicrons, VLDLs, and HDLs by hepatocytes. APOE is also involved in the biosynthesis by the liver of VLDLs as well as their uptake by peripheral tissues ensuring the delivery of triglycerides and energy storage in muscle, heart and adipose tissues. By participating in the lipoprotein-mediated distribution of lipids among tissues, APOE plays a critical role in plasma and tissues lipid homeostasis. APOE is also involved in two steps of reverse cholesterol transport, the HDLs-mediated transport of cholesterol from peripheral tissues to the liver, and thereby plays an important role in cholesterol homeostasis. First, it is functionally associated with ABCA1 in the biogenesis of HDLs in tissues. Second, it is enriched in circulating HDLs and mediates their uptake by hepatocytes. APOE also plays an important role in lipid transport in the central nervous system, regulating neuron survival and sprouting. The polypeptide is Apolipoprotein E (Apoe) (Grammomys surdaster (African woodland thicket rat)).